The sequence spans 728 residues: Catalase-peroxidase (728 aa).

The segment at residues 97–225 (WHSAGTYRIA…LAAVMMGLIY (129 aa)) is a cross-link (tryptophyl-tyrosyl-methioninium (Trp-Tyr) (with M-251)). Catalysis depends on histidine 98, which acts as the Proton acceptor. Residues 225-251 (YVNPEGVDGNPDPLRTAQDIRITFARM) constitute a cross-link (tryptophyl-tyrosyl-methioninium (Tyr-Met) (with W-97)). Heme b is bound at residue histidine 266.

The protein belongs to the peroxidase family. Peroxidase/catalase subfamily. In terms of assembly, homodimer or homotetramer. Heme b serves as cofactor. In terms of processing, formation of the three residue Trp-Tyr-Met cross-link is important for the catalase, but not the peroxidase activity of the enzyme.

The enzyme catalyses H2O2 + AH2 = A + 2 H2O. The catalysed reaction is 2 H2O2 = O2 + 2 H2O. Its function is as follows. Bifunctional enzyme with both catalase and broad-spectrum peroxidase activity. The chain is Catalase-peroxidase from Shewanella putrefaciens (strain CN-32 / ATCC BAA-453).